Consider the following 55-residue polypeptide: Large ribosomal subunit protein bL33 (55 aa).

It belongs to the bacterial ribosomal protein bL33 family.

This is Large ribosomal subunit protein bL33 from Rhodopseudomonas palustris (strain BisB5).